A 432-amino-acid polypeptide reads, in one-letter code: Amino-acid acetyltransferase (432 aa).

The region spanning 286–425 (EQLREAGIED…ASLYNFQRNS (140 aa)) is the N-acetyltransferase domain.

The protein belongs to the acetyltransferase family. ArgA subfamily.

Its subcellular location is the cytoplasm. The catalysed reaction is L-glutamate + acetyl-CoA = N-acetyl-L-glutamate + CoA + H(+). The protein operates within amino-acid biosynthesis; L-arginine biosynthesis; N(2)-acetyl-L-ornithine from L-glutamate: step 1/4. In Pseudomonas aeruginosa (strain LESB58), this protein is Amino-acid acetyltransferase.